The following is a 521-amino-acid chain: Protein DETOXIFICATION 44, chloroplastic (521 aa).

Residues 1–31 (MAAVATSFCFSPHRSPSRFGNPNSSIRRTIV) constitute a chloroplast transit peptide. The tract at residues 12–73 (PHRSPSRFGN…DHDHKPDPGI (62 aa)) is disordered. Composition is skewed to polar residues over residues 18–27 (RFGNPNSSIR) and 42–61 (AVST…TSQN). Helical transmembrane passes span 80–100 (IMSI…TSLV), 103–123 (AFVG…VSVF), 167–187 (VSTS…ALSL), 213–235 (RLRA…FRGF), 242–262 (LYAV…LIFV), 268–288 (SGAA…LLWK), 314–334 (LLIG…SLAA), 345–365 (QIVL…AIAA), 385–405 (LFGV…VLFI), 423–443 (IALS…LAFV), 454–474 (FGFA…FMLV), and 481–503 (LAGI…AWRL).

It belongs to the multi antimicrobial extrusion (MATE) (TC 2.A.66.1) family. In terms of tissue distribution, expressed in shoots.

Its subcellular location is the plastid. It is found in the chloroplast membrane. The chain is Protein DETOXIFICATION 44, chloroplastic from Arabidopsis thaliana (Mouse-ear cress).